We begin with the raw amino-acid sequence, 101 residues long: Toxin Tpa8 (101 aa).

The N-terminal stretch at M1–V20 is a signal peptide. The LCN-type CS-alpha/beta domain occupies K24–E98. 4 cysteine pairs are disulfide-bonded: C44/C70, C56/C75, C60/C77, and C71/C97.

It belongs to the long (4 C-C) scorpion toxin superfamily. Sodium channel inhibitor family. Beta subfamily. Expressed by the venom gland.

It localises to the secreted. Excitatory insect beta-toxins induce a spastic paralysis. They bind voltage-independently at site-4 of sodium channels (Nav) and shift the voltage of activation toward more negative potentials thereby affecting sodium channel activation and promoting spontaneous and repetitive firing. This is Toxin Tpa8 from Tityus pachyurus (Colombian scorpion).